Consider the following 156-residue polypeptide: Small ribosomal subunit protein uS7 (156 aa).

Belongs to the universal ribosomal protein uS7 family. Part of the 30S ribosomal subunit. Contacts proteins S9 and S11.

Its function is as follows. One of the primary rRNA binding proteins, it binds directly to 16S rRNA where it nucleates assembly of the head domain of the 30S subunit. Is located at the subunit interface close to the decoding center, probably blocks exit of the E-site tRNA. The protein is Small ribosomal subunit protein uS7 of Salinispora arenicola (strain CNS-205).